The following is a 66-amino-acid chain: Beta-toxin Cll1m (66 aa).

In terms of domain architecture, LCN-type CS-alpha/beta spans 1-66 (KEGYIVNLST…VWPLPKKTCT (66 aa)). 4 disulfide bridges follow: C12/C65, C16/C41, C25/C46, and C29/C48. Threonine amide is present on T66.

Belongs to the long (4 C-C) scorpion toxin superfamily. Sodium channel inhibitor family. Beta subfamily. As to expression, expressed by the venom gland.

It is found in the secreted. Its function is as follows. Beta toxins bind voltage-independently at site-4 of sodium channels (Nav) and shift the voltage of activation toward more negative potentials thereby affecting sodium channel activation and promoting spontaneous and repetitive firing. The chain is Beta-toxin Cll1m from Centruroides limpidus (Mexican scorpion).